Reading from the N-terminus, the 255-residue chain is uncharacterized protein (255 aa).

A J domain is found at D4 to G72. Basic residues-rich tracts occupy residues F167–A178 and T243–E255. Disordered regions lie at residues F167–L215 and L230–E255.

The protein belongs to the DnaJ family.

It localises to the nucleus. Its subcellular location is the nucleolus. This is an uncharacterized protein from Schizosaccharomyces pombe (strain 972 / ATCC 24843) (Fission yeast).